The primary structure comprises 397 residues: UDP-galactose translocator (397 aa).

Positions 1-21 are disordered; sequence MAAVGSGGSNAAAGPGAVSAG. 10 consecutive transmembrane segments (helical) span residues 3–23, 37–57, 65–85, 97–117, 140–160, 169–189, 200–220, 238–258, 269–289, and 315–335; these read AVGS…AGSL, YISL…IRYA, FFAT…CLLL, LALF…KLAV, TFQV…VLML, WASL…QAGG, GAGL…GVYF, LGLF…GTAV, PAVW…AVVV, and LFGF…IGAV. The segment covering 9-21 has biased composition (low complexity); it reads SNAAAGPGAVSAG. The tract at residues 355–397 is disordered; sequence ASASTSGPCTHQQPPGQPPPPKLSSHRADLSTEPFLPKSVLVK.

It belongs to the nucleotide-sugar transporter family. SLC35A subfamily. Interacts with SLC35A3; the interaction is reduced in the presence of SLC35A4. Found in a complex with SLC35A3 and SLC35A4.

The protein localises to the golgi apparatus membrane. It catalyses the reaction UMP(out) + UDP-alpha-D-galactose(in) = UMP(in) + UDP-alpha-D-galactose(out). The catalysed reaction is UDP-N-acetyl-alpha-D-galactosamine(in) + UMP(out) = UDP-N-acetyl-alpha-D-galactosamine(out) + UMP(in). The enzyme catalyses UMP(out) + UDP-alpha-D-glucose(in) = UMP(in) + UDP-alpha-D-glucose(out). It carries out the reaction UMP(out) + UDP-N-acetyl-alpha-D-glucosamine(in) = UMP(in) + UDP-N-acetyl-alpha-D-glucosamine(out). It catalyses the reaction UDP-alpha-D-galactose(in) + AMP(out) = UDP-alpha-D-galactose(out) + AMP(in). The catalysed reaction is UDP-alpha-D-galactose(in) + CMP(out) = UDP-alpha-D-galactose(out) + CMP(in). The enzyme catalyses UDP-N-acetyl-alpha-D-galactosamine(out) + UDP-alpha-D-galactose(in) = UDP-N-acetyl-alpha-D-galactosamine(in) + UDP-alpha-D-galactose(out). It carries out the reaction UDP-N-acetyl-alpha-D-glucosamine(out) + UDP-alpha-D-galactose(in) = UDP-N-acetyl-alpha-D-glucosamine(in) + UDP-alpha-D-galactose(out). It catalyses the reaction UDP-alpha-D-galactose(in) + UDP-alpha-D-glucose(out) = UDP-alpha-D-galactose(out) + UDP-alpha-D-glucose(in). The catalysed reaction is UMP(out) + CMP(in) = UMP(in) + CMP(out). The enzyme catalyses UMP(out) + AMP(in) = UMP(in) + AMP(out). Transports uridine diphosphate galactose (UDP-galactose) from the cytosol into the Golgi apparatus, functioning as an antiporter that exchanges UDP-galactose for UMP. It is also able to exchange UDP-galactose for AMP and CMP, and to transport UDP-N-acetylgalactosamine (UDP-GalNAc) and other nucleotide sugars. As a provider of UDP-galactose to galactosyltransferases present in the Golgi apparatus, it is necessary for globotriaosylceramide/globoside (Gb3Cer) synthesis from lactosylceramide. This Canis lupus familiaris (Dog) protein is UDP-galactose translocator.